Reading from the N-terminus, the 322-residue chain is N-acetyl-gamma-glutamyl-phosphate reductase (322 aa).

C132 is an active-site residue.

It belongs to the NAGSA dehydrogenase family. Type 1 subfamily.

It localises to the cytoplasm. The enzyme catalyses N-acetyl-L-glutamate 5-semialdehyde + phosphate + NADP(+) = N-acetyl-L-glutamyl 5-phosphate + NADPH + H(+). It participates in amino-acid biosynthesis; L-arginine biosynthesis; N(2)-acetyl-L-ornithine from L-glutamate: step 3/4. In terms of biological role, catalyzes the NADPH-dependent reduction of N-acetyl-5-glutamyl phosphate to yield N-acetyl-L-glutamate 5-semialdehyde. The sequence is that of N-acetyl-gamma-glutamyl-phosphate reductase from Parabacteroides distasonis (strain ATCC 8503 / DSM 20701 / CIP 104284 / JCM 5825 / NCTC 11152).